We begin with the raw amino-acid sequence, 114 residues long: MRFLNNKHRAKGLKAEEEACEFLKTLGFEMVERNFFSKFGEIDIIALKKGVLHFIEVKSGENFDPIYAITPSKLKKMIKTIRCYFSQKDPNSDFCIDALIVKNGKFELLENITF.

Belongs to the UPF0102 family.

This is UPF0102 protein HPSH_02690 from Helicobacter pylori (strain Shi470).